A 410-amino-acid polypeptide reads, in one-letter code: Elongation factor Tu, chloroplastic (410 aa).

The region spanning 10-215 is the tr-type G domain; that stretch reads KPHVNIGTIG…AVDQYIPTPK (206 aa). The G1 stretch occupies residues 19 to 26; sequence GHVDHGKT. 19 to 26 contributes to the GTP binding site; the sequence is GHVDHGKT. Mg(2+) is bound at residue Thr-26. The interval 61–65 is G2; the sequence is GITIN. The G3 stretch occupies residues 82–85; that stretch reads DCPG. Residues 82–86 and 137–140 each bind GTP; these read DCPGH and NKQD. Residues 137–140 are G4; the sequence is NKQD. The G5 stretch occupies residues 175-177; that stretch reads SAL.

This sequence belongs to the TRAFAC class translation factor GTPase superfamily. Classic translation factor GTPase family. EF-Tu/EF-1A subfamily.

Its subcellular location is the plastid. The protein resides in the chloroplast. It carries out the reaction GTP + H2O = GDP + phosphate + H(+). Functionally, GTP hydrolase that promotes the GTP-dependent binding of aminoacyl-tRNA to the A-site of ribosomes during protein biosynthesis. This is Elongation factor Tu, chloroplastic (tufA) from Nephroselmis olivacea (Green alga).